The chain runs to 198 residues: MSKVLYVKANIKNEGESRTFKVSDSFVEEYKKNNPEDEIITLDLYKENIDFLRVDDLGKLFGTKDEESKNNSILKYAYQFADADKYIIAAPMWNISFPAILKAYIDYVSVSGITFKYTAEGPVGLLNNKKAVHIVSRGGGYDNSPYEMGDRYLRTILGFFGIKDIETIAIDNLDVMGVNVKEKVEEGIEKAISLAKKF.

136-139 contributes to the FMN binding site; that stretch reads SRGG.

The protein belongs to the azoreductase type 1 family. As to quaternary structure, homodimer. FMN serves as cofactor.

The catalysed reaction is 2 a quinone + NADH + H(+) = 2 a 1,4-benzosemiquinone + NAD(+). It catalyses the reaction N,N-dimethyl-1,4-phenylenediamine + anthranilate + 2 NAD(+) = 2-(4-dimethylaminophenyl)diazenylbenzoate + 2 NADH + 2 H(+). In terms of biological role, quinone reductase that provides resistance to thiol-specific stress caused by electrophilic quinones. Its function is as follows. Also exhibits azoreductase activity. Catalyzes the reductive cleavage of the azo bond in aromatic azo compounds to the corresponding amines. In Clostridium perfringens (strain 13 / Type A), this protein is FMN-dependent NADH:quinone oxidoreductase 2.